We begin with the raw amino-acid sequence, 447 residues long: Ribulose bisphosphate carboxylase large chain (447 aa).

Residues asparagine 89 and threonine 139 each coordinate substrate. Residue lysine 141 is the Proton acceptor of the active site. Lysine 143 is a binding site for substrate. Residues lysine 167, aspartate 169, and glutamate 170 each coordinate Mg(2+). An N6-carboxylysine modification is found at lysine 167. The active-site Proton acceptor is the histidine 260. Substrate contacts are provided by arginine 261, histidine 293, and serine 345.

The protein belongs to the RuBisCO large chain family. Type I subfamily. As to quaternary structure, heterohexadecamer of 8 large chains and 8 small chains; disulfide-linked. The disulfide link is formed within the large subunit homodimers. The cofactor is Mg(2+). In terms of processing, the disulfide bond which can form in the large chain dimeric partners within the hexadecamer appears to be associated with oxidative stress and protein turnover.

The protein resides in the plastid. It is found in the chloroplast. The catalysed reaction is 2 (2R)-3-phosphoglycerate + 2 H(+) = D-ribulose 1,5-bisphosphate + CO2 + H2O. It carries out the reaction D-ribulose 1,5-bisphosphate + O2 = 2-phosphoglycolate + (2R)-3-phosphoglycerate + 2 H(+). In terms of biological role, ruBisCO catalyzes two reactions: the carboxylation of D-ribulose 1,5-bisphosphate, the primary event in carbon dioxide fixation, as well as the oxidative fragmentation of the pentose substrate in the photorespiration process. Both reactions occur simultaneously and in competition at the same active site. The polypeptide is Ribulose bisphosphate carboxylase large chain (Ligustrum vulgare (Common privet)).